A 102-amino-acid polypeptide reads, in one-letter code: Large ribosomal subunit protein bL21 (102 aa).

Belongs to the bacterial ribosomal protein bL21 family. In terms of assembly, part of the 50S ribosomal subunit. Contacts protein L20.

Its function is as follows. This protein binds to 23S rRNA in the presence of protein L20. The sequence is that of Large ribosomal subunit protein bL21 from Ligilactobacillus salivarius (strain UCC118) (Lactobacillus salivarius).